A 198-amino-acid polypeptide reads, in one-letter code: MSFPRVGVLALQGDTREHLTALREAGADSMPVRRRGELDEVDALVIPGGESTTISHLLLDCELLEPLRARLADGLPAYGACTGMILLASEILDAGVCGREALPLGAIDITVRRNAFGRQVDSFEGDIGFAGLVDPVRAVFIRAPWVERAGDGVQVLAQAAGHAVAVRQGSMLATAFHPEMTSDRRIHQLFVDIVNGIA.

49–51 is a binding site for L-glutamine; sequence GES. Residue C81 is the Nucleophile of the active site. Residues R113 and 141 to 142 contribute to the L-glutamine site; that span reads IR. Residues H177 and E179 each act as charge relay system in the active site.

This sequence belongs to the glutaminase PdxT/SNO family. In the presence of PdxS, forms a dodecamer of heterodimers. Only shows activity in the heterodimer.

The enzyme catalyses aldehydo-D-ribose 5-phosphate + D-glyceraldehyde 3-phosphate + L-glutamine = pyridoxal 5'-phosphate + L-glutamate + phosphate + 3 H2O + H(+). It catalyses the reaction L-glutamine + H2O = L-glutamate + NH4(+). It functions in the pathway cofactor biosynthesis; pyridoxal 5'-phosphate biosynthesis. In terms of biological role, catalyzes the hydrolysis of glutamine to glutamate and ammonia as part of the biosynthesis of pyridoxal 5'-phosphate. The resulting ammonia molecule is channeled to the active site of PdxS. The sequence is that of Pyridoxal 5'-phosphate synthase subunit PdxT from Mycobacterium leprae (strain TN).